The chain runs to 297 residues: Phosphatidylinositol N-acetylglucosaminyltransferase subunit C (297 aa).

The next 4 helical transmembrane spans lie at 67–87 (VFVV…WLFG), 88–108 (TGLA…GGDG), 153–173 (AVFM…AAIV), and 239–259 (AFGG…LLLF).

This sequence belongs to the PIGC family. As to quaternary structure, component of the glycosylphosphatidylinositol-N-acetylglucosaminyltransferase (GPI-GnT) complex composed at least by PIGA, PIGC, PIGH, PIGP, PIGQ, PIGY and DPM2. Interacts with PIGQ. Interacts with the heterodimer PIGA:PIGH.

The protein localises to the endoplasmic reticulum membrane. The protein operates within glycolipid biosynthesis; glycosylphosphatidylinositol-anchor biosynthesis. Functionally, part of the glycosylphosphatidylinositol-N-acetylglucosaminyltransferase (GPI-GnT) complex that catalyzes the transfer of N-acetylglucosamine from UDP-N-acetylglucosamine to phosphatidylinositol and participates in the first step of GPI biosynthesis. This chain is Phosphatidylinositol N-acetylglucosaminyltransferase subunit C, found in Mus musculus (Mouse).